A 472-amino-acid chain; its full sequence is ATP synthase subunit beta (472 aa).

155–162 serves as a coordination point for ATP; sequence GGAGVGKT.

Belongs to the ATPase alpha/beta chains family. F-type ATPases have 2 components, CF(1) - the catalytic core - and CF(0) - the membrane proton channel. CF(1) has five subunits: alpha(3), beta(3), gamma(1), delta(1), epsilon(1). CF(0) has three main subunits: a(1), b(2) and c(9-12). The alpha and beta chains form an alternating ring which encloses part of the gamma chain. CF(1) is attached to CF(0) by a central stalk formed by the gamma and epsilon chains, while a peripheral stalk is formed by the delta and b chains.

Its subcellular location is the cell membrane. It catalyses the reaction ATP + H2O + 4 H(+)(in) = ADP + phosphate + 5 H(+)(out). Its function is as follows. Produces ATP from ADP in the presence of a proton gradient across the membrane. The catalytic sites are hosted primarily by the beta subunits. This chain is ATP synthase subunit beta, found in Fervidobacterium islandicum.